The sequence spans 699 residues: Elongation factor G (699 aa).

Positions 8-288 (EDYRNFGIMA…AVVDYLPSPI (281 aa)) constitute a tr-type G domain. GTP contacts are provided by residues 17–24 (AHIDAGKT), 86–90 (DTPGH), and 140–143 (NKMD).

The protein belongs to the TRAFAC class translation factor GTPase superfamily. Classic translation factor GTPase family. EF-G/EF-2 subfamily.

It localises to the cytoplasm. Functionally, catalyzes the GTP-dependent ribosomal translocation step during translation elongation. During this step, the ribosome changes from the pre-translocational (PRE) to the post-translocational (POST) state as the newly formed A-site-bound peptidyl-tRNA and P-site-bound deacylated tRNA move to the P and E sites, respectively. Catalyzes the coordinated movement of the two tRNA molecules, the mRNA and conformational changes in the ribosome. The sequence is that of Elongation factor G from Sinorhizobium fredii (strain NBRC 101917 / NGR234).